Reading from the N-terminus, the 153-residue chain is RNA-binding protein OPG065 (153 aa).

Residues 1–33 form the Z-binding domain; that stretch reads MEKREVNKALYDLQRSAMVYSSNDTPPRWSTTM. The span at 22–34 shows a compositional bias: polar residues; the sequence is SNDTPPRWSTTMD. The tract at residues 22-44 is disordered; it reads SNDTPPRWSTTMDADTRPTDSDA. The DRBM domain occupies 80–147; that stretch reads NPVTVINEYC…AKLAVDKLLS (68 aa).

Belongs to the orthopoxvirus OPG065 family. In terms of assembly, interacts with host G1P2/ISG15. Interacts with host EIF2AK2/PKR. Interacts with host ZBP1.

Its function is as follows. RNA-binding protein that plays a role in the inhibition of multiple cellular antiviral responses activated by double-stranded RNA (dsRNA), such as inhibition of PKR activation, necroptosis, and IFN-mediated antiviral activities. Recognizes and binds Z-RNA structures via its Z-binding domain and dsRNA via its DRBM domain: RNA-binding activity is required to escape host ZBP1-dependent necroptosis. Mechanistically, the Z-binding domain binds Z-RNAs that are produced during vaccinia virus infection, thereby competing with Z-RNA detection by host ZBP1, suppressing ZBP1-dependent necroptosis. Acts as a key inhibitor of the interferon response by blocking the phosphorylation and subsequent activation of IRF3 and IRF7 kinases that are required for interferon-alpha gene expression. Inhibits NF-kappa-B activation and the ubiquitin-like protein ISG15, which is an early antiviral protein. The binding with host ISG15 subsequently blocks host ISGylation. The chain is RNA-binding protein OPG065 (OPG065) from Monkeypox virus.